The chain runs to 512 residues: V-type proton ATPase subunit B (512 aa).

Arginine 381 is a binding site for ATP. A disordered region spans residues 484–512; that stretch reads LYGRDREQDDDEDEDEEDPDKSGDKLIDA. Residues 491-502 are compositionally biased toward acidic residues; it reads QDDDEDEDEEDP. Positions 503–512 are enriched in basic and acidic residues; that stretch reads DKSGDKLIDA.

This sequence belongs to the ATPase alpha/beta chains family. In terms of assembly, V-ATPase is a heteromultimeric enzyme composed of a peripheral catalytic V1 complex (components A to H) attached to an integral membrane V0 proton pore complex (components: a, c, c', c'', d, e, f and VOA1).

It localises to the vacuole membrane. Non-catalytic subunit of the V1 complex of vacuolar(H+)-ATPase (V-ATPase), a multisubunit enzyme composed of a peripheral complex (V1) that hydrolyzes ATP and a membrane integral complex (V0) that translocates protons. Plays an important role in resistance to several stresses, as well as in autophagy and virulence. This is V-type proton ATPase subunit B from Candida albicans (strain SC5314 / ATCC MYA-2876) (Yeast).